We begin with the raw amino-acid sequence, 87 residues long: MTIFSTISSMSNVSSSSKSKISLMANSNGGQSLNNISCGGCGGSSSGGIVYTGPSGRSYTLPELIAVGVAHTKAFLMGASGSGNCSC.

Belongs to the hssA/B family.

The protein is HssA/B-like protein 31 (hssl31) of Dictyostelium discoideum (Social amoeba).